The sequence spans 279 residues: Probable phosphatase phospho1 (279 aa).

The active-site Nucleophile is the D41. D41 and D43 together coordinate Mg(2+). The Proton donor role is filled by D43. D52 and D133 together coordinate substrate. Position 215 (D215) interacts with Mg(2+).

Belongs to the HAD-like hydrolase superfamily. PHOSPHO family. Mg(2+) is required as a cofactor.

It localises to the extracellular vesicle. It catalyses the reaction phosphoethanolamine + H2O = ethanolamine + phosphate. The catalysed reaction is phosphocholine + H2O = choline + phosphate. Phosphatase that has a high activity toward phosphoethanolamine (PEA) and phosphocholine (PCho). Involved in the generation of inorganic phosphate for bone mineralization. The chain is Probable phosphatase phospho1 (phospho1) from Danio rerio (Zebrafish).